The chain runs to 500 residues: Versicolorin B desaturase (500 aa).

The chain crosses the membrane as a helical span at residues 3 to 23; the sequence is FLSLPSLVIVIPVGYLLFHLG. N243 and N400 each carry an N-linked (GlcNAc...) asparagine glycan. C438 is a heme binding site.

Belongs to the cytochrome P450 family. It depends on heme as a cofactor.

The protein resides in the membrane. The enzyme catalyses versicolorin B + NADPH + O2 + H(+) = versicolorin A + NADP(+) + 2 H2O. Its pathway is mycotoxin biosynthesis; aflatoxin biosynthesis. Versicolorin B desaturase; part of the gene cluster that mediates the biosynthesis of aflatoxins, a group of polyketide-derived furanocoumarins, and part of the most toxic and carcinogenic compounds among the known mycotoxins. The four major aflatoxins produced by A.parasiticus are aflatoxin B1 (AFB1), aflatoxin B2 (AFB2), aflatoxin G1 (AFG1) and aflatoxin G2 (AFG2). Within the aflatoxin pathway, the versicolorin B desaturase aflL catalyzes the conversion of versicolorin B (VERB) to versicolorin A (VERA). The biosynthesis of aflatoxins begins with the norsolorinic acid synthase aflC that combines a hexanoyl starter unit produced by the fatty acid synthase aflA/aflB and 7 malonyl-CoA extender units to synthesize the precursor NOR. The second step is the conversion of NOR to averantin and requires the norsolorinic acid ketoreductase aflD, which catalyzes the dehydration of norsolorinic acid to form (1'S)-averantin. The norsolorinic acid reductases aflE and aflF may also play a role in the conversion of NOR to AVN. The cytochrome P450 monooxygenase aflG then catalyzes the hydroxylation of AVN to 5'hydroxyaverantin (HAVN). The next step is performed by the 5'-hydroxyaverantin dehydrogenase aflH that transforms HAVN to 5'-oxoaverantin (OAVN) which is further converted to averufin (AVF) by aflK that plays a dual role in the pathway, as a 5'-oxoaverantin cyclase that mediates conversion of 5'-oxoaverantin, as well as a versicolorin B synthase in a later step in the pathway. The averufin oxidase aflI catalyzes the conversion of AVF to versiconal hemiacetal acetate (VHA). VHA is then the substrate for the versiconal hemiacetal acetate esterase aflJ to yield versiconal (VAL). Versicolorin B synthase aflK then converts VAL to versicolorin B (VERB) by closing the bisfuran ring of aflatoxin which is required for DNA-binding, thus giving to aflatoxin its activity as a mutagen. Then, the activity of the versicolorin B desaturase aflL leads to versicolorin A (VERA). A branch point starts from VERB since it can also be converted to dihydrodemethylsterigmatocystin (DMDHST), probably also by aflL, VERA being a precursor for aflatoxins B1 and G1, and DMDHST for aflatoxins B2 and G2. Next, the versicolorin reductase aflM and the cytochrome P450 monooxygenase aflN are involved in conversion of VERA to demethylsterigmatocystin (DMST). AflX and aflY seem also involved in this step, through probable aflX-mediated epoxide ring-opening step following versicolorin A oxidation and aflY-mediated Baeyer-Villiger oxidation required for the formation of the xanthone ring. The methyltransferase aflO then leads to the modification of DMST to sterigmatocystin (ST), and of DMDHST to dihydrosterigmatocystin (DHST). Both ST and DHST are then substrates of the O-methyltransferase aflP to yield O-methylsterigmatocystin (OMST) and dihydro-O-methylsterigmatocystin (DHOMST), respectively. Finally OMST is converted to aflatoxins B1 and G1, and DHOMST to aflatoxins B2 and G2, via the action of several enzymes including O-methylsterigmatocystin oxidoreductase aflQ, the cytochrome P450 monooxygenase aflU, but also the NADH-dependent flavin oxidoreductase nadA which is specifically required for the synthesis of AFG1. In Aspergillus parasiticus (strain ATCC 56775 / NRRL 5862 / SRRC 143 / SU-1), this protein is Versicolorin B desaturase.